A 313-amino-acid polypeptide reads, in one-letter code: Beta-ketoacyl-[acyl-carrier-protein] synthase III (313 aa).

Catalysis depends on residues C112 and H238. The segment at 239-243 is ACP-binding; that stretch reads QANIR. N268 is an active-site residue.

It belongs to the thiolase-like superfamily. FabH family. Homodimer.

The protein resides in the cytoplasm. The catalysed reaction is malonyl-[ACP] + acetyl-CoA + H(+) = 3-oxobutanoyl-[ACP] + CO2 + CoA. Its pathway is lipid metabolism; fatty acid biosynthesis. In terms of biological role, catalyzes the condensation reaction of fatty acid synthesis by the addition to an acyl acceptor of two carbons from malonyl-ACP. Catalyzes the first condensation reaction which initiates fatty acid synthesis and may therefore play a role in governing the total rate of fatty acid production. Possesses both acetoacetyl-ACP synthase and acetyl transacylase activities. Its substrate specificity determines the biosynthesis of branched-chain and/or straight-chain of fatty acids. The protein is Beta-ketoacyl-[acyl-carrier-protein] synthase III of Staphylococcus saprophyticus subsp. saprophyticus (strain ATCC 15305 / DSM 20229 / NCIMB 8711 / NCTC 7292 / S-41).